Reading from the N-terminus, the 122-residue chain is Small ribosomal subunit protein uS13 (122 aa).

A disordered region spans residues 95 to 122; sequence SLPCRGQRTSTNARTRKGPKRAAVKKKK. The segment covering 108–122 has biased composition (basic residues); it reads RTRKGPKRAAVKKKK.

This sequence belongs to the universal ribosomal protein uS13 family. As to quaternary structure, part of the 30S ribosomal subunit. Forms a loose heterodimer with protein S19. Forms two bridges to the 50S subunit in the 70S ribosome.

Located at the top of the head of the 30S subunit, it contacts several helices of the 16S rRNA. In the 70S ribosome it contacts the 23S rRNA (bridge B1a) and protein L5 of the 50S subunit (bridge B1b), connecting the 2 subunits; these bridges are implicated in subunit movement. Contacts the tRNAs in the A and P-sites. This Desulforapulum autotrophicum (strain ATCC 43914 / DSM 3382 / VKM B-1955 / HRM2) (Desulfobacterium autotrophicum) protein is Small ribosomal subunit protein uS13.